Here is a 434-residue protein sequence, read N- to C-terminus: Probable exopolygalacturonase X (434 aa).

The signal sequence occupies residues 1-23 (MKFLHTVAQTATLLLSLGASVEG). The tract at residues 35-54 (HHPFRPLPASTPRTKTCHVR) is disordered. Asn-113, Asn-129, and Asn-199 each carry an N-linked (GlcNAc...) asparagine glycan. A PbH1 1 repeat occupies 231-252 (SSNIVIQNSVVNNGDDCVSFKP). Asp-245 (proton donor) is an active-site residue. Residues Cys-247 and Cys-264 are joined by a disulfide bond. N-linked (GlcNAc...) asparagine glycosylation is found at Asn-253 and Asn-265. A PbH1 2 repeat occupies 254–274 (STDILVQNMHCNGSHGISVGS). The active site involves His-268. 5 N-linked (GlcNAc...) asparagine glycosylation sites follow: Asn-292, Asn-297, Asn-329, Asn-354, and Asn-364. Residues 327 to 348 (VSNITYDRMYIENVDWAIEVTQ) form a PbH1 3 repeat. The PbH1 4 repeat unit spans residues 362 to 394 (PSNLTISDVHIKNMWGTTSGKRDPNVGTIVCSS). A disulfide bond links Cys-392 and Cys-398. Residues Asn-407 and Asn-430 are each glycosylated (N-linked (GlcNAc...) asparagine).

Belongs to the glycosyl hydrolase 28 family.

Its subcellular location is the secreted. The catalysed reaction is [(1-&gt;4)-alpha-D-galacturonosyl](n) + H2O = alpha-D-galacturonate + [(1-&gt;4)-alpha-D-galacturonosyl](n-1). Its function is as follows. Specific in hydrolyzing the terminal glycosidic bond of polygalacturonic acid and oligogalacturonates. The polypeptide is Probable exopolygalacturonase X (pgaX) (Aspergillus terreus (strain NIH 2624 / FGSC A1156)).